The primary structure comprises 336 residues: Protease HtpX homolog (336 aa).

Helical transmembrane passes span 7 to 24 (AMLL…GFLI) and 29 to 48 (GMMI…YWNA). Histidine 130 provides a ligand contact to Zn(2+). The active site involves glutamate 131. Residue histidine 134 participates in Zn(2+) binding. 2 helical membrane-spanning segments follow: residues 145 to 165 (IVAT…FLGG) and 171 to 191 (PFGF…AMIV). Position 200 (glutamate 200) interacts with Zn(2+). The segment covering 278–287 (QQMAGGTQAA) has biased composition (low complexity). The disordered stretch occupies residues 278–336 (QQMAGGTQAAPRPTPRQAGEQQPSGPWGQAPQAEQPAEPERPKANPWGRNPTGPKGRWS).

It belongs to the peptidase M48B family. Requires Zn(2+) as cofactor.

The protein resides in the cell inner membrane. The protein is Protease HtpX homolog of Mesorhizobium japonicum (strain LMG 29417 / CECT 9101 / MAFF 303099) (Mesorhizobium loti (strain MAFF 303099)).